The primary structure comprises 395 residues: Leukosialin (395 aa).

The N-terminal stretch at 1–19 is a signal peptide; it reads MALHLLLLFGACWVQVASP. At 20–248 the chain is on the extracellular side; the sequence is DSLQRTTMLP…TRSPSQESSG (229 aa). Over residues 27–56 the composition is skewed to polar residues; that stretch reads MLPSTPHITAPSTSEAQNASPSVSVGSGTV. The interval 27 to 245 is disordered; that stretch reads MLPSTPHITA…PITTRSPSQE (219 aa). Over residues 73–88 the composition is skewed to low complexity; that stretch reads SLTPLETTELSSLETS. 2 stretches are compositionally biased toward polar residues: residues 89–111 and 145–154; these read AGAS…SKTS and TAASTSISKG. A compositionally biased stretch (low complexity) spans 155-166; that stretch reads TSAPPTTVTTSS. Residue asparagine 167 is glycosylated (N-linked (GlcNAc...) asparagine). A compositionally biased stretch (polar residues) spans 167 to 196; that stretch reads NETSGPSVATTVSSKTSGPPVTTATGSLGP. Positions 205 to 241 are enriched in low complexity; the sequence is ATTATSSVESSSVARGTSVSSRKTSTTSTQDPITTRS. The chain crosses the membrane as a helical span at residues 249–271; sequence MLLVPMLIALVVVLALVALLLLW. The segment at 272–302 is required for interaction with EZR, MSN and RDX and for co-localization to microvilli; the sequence is RQRQKRRTGALTLSGGGKRNGVVDAWAGPAR. The Cytoplasmic segment spans residues 272–395; that stretch reads RQRQKRRTGA…AKDEAAPQSL (124 aa). Positions 276 to 290 match the Nuclear localization signal motif; the sequence is KRRTGALTLSGGGKR. Phosphoserine occurs at positions 285 and 328. The tract at residues 303–395 is disordered; the sequence is VPDEEATTTS…AKDEAAPQSL (93 aa). A compositionally biased stretch (polar residues) spans 327 to 338; that stretch reads GSGQRPTLTTFF. Threonine 333 bears the Phosphothreonine mark. 2 positions are modified to phosphoserine: serine 339 and serine 343. Serine 347 is modified (phosphoserine; by PKC/PRKCQ). Residue serine 371 is modified to Phosphoserine. Position 378 is a phosphothreonine (threonine 378). Basic and acidic residues predominate over residues 385 to 395; it reads QAKDEAAPQSL.

Interacts with SIGLEC1. As to quaternary structure, interacts with isoform 2 of HIPK2. Interacts with CTNNB1. Interacts with RDX (via FERM domain). Interacts with EZR. Interacts with MSN. Phosphorylation at Ser-347 is regulated by chemokines, requires its association with ERM proteins (EZR, RDX and MSN) and is essential for its function in the regulation of T-cell trafficking to lymph nodes. Post-translationally, has a high content of sialic acid and O-linked carbohydrate structures. In terms of processing, cleavage by CTSG releases its extracellular domain and triggers its intramembrane proteolysis by gamma-secretase releasing the CD43 cytoplasmic tail chain (CD43-ct) which translocates to the nucleus. Sumoylated. Cell surface of thymocytes, T-lymphocytes, neutrophils, plasma cells and myelomas.

It localises to the membrane. The protein localises to the cell projection. It is found in the microvillus. Its subcellular location is the uropodium. The protein resides in the nucleus. It localises to the PML body. Predominant cell surface sialoprotein of leukocytes which regulates multiple T-cell functions, including T-cell activation, proliferation, differentiation, trafficking and migration. Positively regulates T-cell trafficking to lymph-nodes via its association with ERM proteins (EZR, RDX and MSN). Negatively regulates Th2 cell differentiation and predisposes the differentiation of T-cells towards a Th1 lineage commitment. Promotes the expression of IFN-gamma by T-cells during T-cell receptor (TCR) activation of naive cells and induces the expression of IFN-gamma by CD4(+) T-cells and to a lesser extent by CD8(+) T-cells. Plays a role in preparing T-cells for cytokine sensing and differentiation into effector cells by inducing the expression of cytokine receptors IFNGR and IL4R, promoting IFNGR and IL4R signaling and by mediating the clustering of IFNGR with TCR. Acts as a major E-selectin ligand responsible for Th17 cell rolling on activated vasculature and recruitment during inflammation. Mediates Th17 cells, but not Th1 cells, adhesion to E-selectin. Acts as a T-cell counter-receptor for SIGLEC1. Its function is as follows. Protects cells from apoptotic signals, promoting cell survival. This chain is Leukosialin (Spn), found in Mus musculus (Mouse).